The following is a 145-amino-acid chain: 3-hydroxyacyl-[acyl-carrier-protein] dehydratase FabZ (145 aa).

Residue H47 is part of the active site.

Belongs to the thioester dehydratase family. FabZ subfamily.

Its subcellular location is the cytoplasm. The enzyme catalyses a (3R)-hydroxyacyl-[ACP] = a (2E)-enoyl-[ACP] + H2O. Its function is as follows. Involved in unsaturated fatty acids biosynthesis. Catalyzes the dehydration of short chain beta-hydroxyacyl-ACPs and long chain saturated and unsaturated beta-hydroxyacyl-ACPs. The chain is 3-hydroxyacyl-[acyl-carrier-protein] dehydratase FabZ from Ruthia magnifica subsp. Calyptogena magnifica.